The chain runs to 255 residues: tRNA uridine(34) hydroxylase (255 aa).

The 95-residue stretch at 125–219 (AAPDTLLIDT…YLEGIPESES (95 aa)) folds into the Rhodanese domain. Residue Cys-179 is the Cysteine persulfide intermediate of the active site.

This sequence belongs to the TrhO family.

It carries out the reaction uridine(34) in tRNA + AH2 + O2 = 5-hydroxyuridine(34) in tRNA + A + H2O. Functionally, catalyzes oxygen-dependent 5-hydroxyuridine (ho5U) modification at position 34 in tRNAs. The protein is tRNA uridine(34) hydroxylase of Nitrobacter hamburgensis (strain DSM 10229 / NCIMB 13809 / X14).